A 317-amino-acid chain; its full sequence is Malate dehydrogenase (317 aa).

Residues 13–18 and Asp38 each bind NAD(+); that span reads GAGNIG. Substrate contacts are provided by Arg87 and Arg93. NAD(+) contacts are provided by residues Asn100 and 123–125; that span reads VTN. Substrate contacts are provided by Asn125 and Arg156. The active-site Proton acceptor is His180.

It belongs to the LDH/MDH superfamily. MDH type 3 family.

It carries out the reaction (S)-malate + NAD(+) = oxaloacetate + NADH + H(+). Its function is as follows. Catalyzes the reversible oxidation of malate to oxaloacetate. This is Malate dehydrogenase from Anaplasma marginale (strain St. Maries).